The following is a 123-amino-acid chain: NADH-quinone oxidoreductase subunit A (123 aa).

A run of 3 helical transmembrane segments spans residues 11–31, 67–87, and 92–112; these read FPVL…VSIG, LVAI…PWGV, and IGWP…LGFA.

The protein belongs to the complex I subunit 3 family. NDH-1 is composed of 14 different subunits. Subunits NuoA, H, J, K, L, M, N constitute the membrane sector of the complex.

It localises to the cell inner membrane. The enzyme catalyses a quinone + NADH + 5 H(+)(in) = a quinol + NAD(+) + 4 H(+)(out). Functionally, NDH-1 shuttles electrons from NADH, via FMN and iron-sulfur (Fe-S) centers, to quinones in the respiratory chain. The immediate electron acceptor for the enzyme in this species is believed to be ubiquinone. Couples the redox reaction to proton translocation (for every two electrons transferred, four hydrogen ions are translocated across the cytoplasmic membrane), and thus conserves the redox energy in a proton gradient. In Paraburkholderia phymatum (strain DSM 17167 / CIP 108236 / LMG 21445 / STM815) (Burkholderia phymatum), this protein is NADH-quinone oxidoreductase subunit A.